A 384-amino-acid polypeptide reads, in one-letter code: NADP-dependent alcohol dehydrogenase 3 (384 aa).

The protein belongs to the iron-containing alcohol dehydrogenase family.

The catalysed reaction is a primary alcohol + NADP(+) = an aldehyde + NADPH + H(+). In terms of biological role, has NADP-dependent alcohol dehydrogenase activity. The protein is NADP-dependent alcohol dehydrogenase 3 of Entamoeba histolytica (strain ATCC 30459 / HM-1:IMSS / ABRM).